A 234-amino-acid chain; its full sequence is Phosphoribosylaminoimidazole-succinocarboxamide synthase (234 aa).

It belongs to the SAICAR synthetase family.

The enzyme catalyses 5-amino-1-(5-phospho-D-ribosyl)imidazole-4-carboxylate + L-aspartate + ATP = (2S)-2-[5-amino-1-(5-phospho-beta-D-ribosyl)imidazole-4-carboxamido]succinate + ADP + phosphate + 2 H(+). It functions in the pathway purine metabolism; IMP biosynthesis via de novo pathway; 5-amino-1-(5-phospho-D-ribosyl)imidazole-4-carboxamide from 5-amino-1-(5-phospho-D-ribosyl)imidazole-4-carboxylate: step 1/2. The chain is Phosphoribosylaminoimidazole-succinocarboxamide synthase from Staphylococcus aureus (strain COL).